Consider the following 207-residue polypeptide: Protein ERP4 (207 aa).

A signal peptide spans Met-1 to Ser-21. The Lumenal segment spans residues Ser-22–Thr-174. One can recognise a GOLD domain in the interval Lys-36 to Lys-118. Residues Trp-175–Ile-195 form a helical membrane-spanning segment. Over Gln-196 to Val-207 the chain is Cytoplasmic.

It belongs to the EMP24/GP25L family.

The protein localises to the endoplasmic reticulum membrane. Involved in vesicular protein trafficking. The protein is Protein ERP4 (ERP4) of Saccharomyces cerevisiae (strain ATCC 204508 / S288c) (Baker's yeast).